The sequence spans 279 residues: UPF0173 metal-dependent hydrolase MXAN_1394 (279 aa).

The protein belongs to the UPF0173 family.

In Myxococcus xanthus (strain DK1622), this protein is UPF0173 metal-dependent hydrolase MXAN_1394.